The sequence spans 123 residues: Small ribosomal subunit protein uS12cz/uS12cy (123 aa).

Belongs to the universal ribosomal protein uS12 family. In terms of assembly, part of the 30S ribosomal subunit.

The protein resides in the plastid. It localises to the chloroplast. Its function is as follows. With S4 and S5 plays an important role in translational accuracy. Located at the interface of the 30S and 50S subunits. The chain is Small ribosomal subunit protein uS12cz/uS12cy (rps12-A) from Coffea arabica (Arabian coffee).